A 198-amino-acid polypeptide reads, in one-letter code: Integrator complex subunit 8-like protein (198 aa).

Belongs to the Integrator subunit 8 family. Component of the Integrator complex. The core complex associates with protein phosphatase 2A subunits, to form the Integrator-PP2A (INTAC) complex.

It localises to the nucleus. The protein resides in the chromosome. Functionally, component of the integrator complex, a multiprotein complex that terminates RNA polymerase II (Pol II) transcription in the promoter-proximal region of genes. The integrator complex provides a quality checkpoint during transcription elongation by driving premature transcription termination of transcripts that are unfavorably configured for transcriptional elongation: the complex terminates transcription by (1) catalyzing dephosphorylation of the C-terminal domain (CTD) of Pol II subunit polr2a, (2) degrading the exiting nascent RNA transcript via endonuclease activity and (3) promoting the release of Pol II from bound DNA. The integrator complex is also involved in terminating the synthesis of non-coding Pol II transcripts, such as enhancer RNAs (eRNAs), small nuclear RNAs (snRNAs), telomerase RNAs and long non-coding RNAs (lncRNAs). Within the integrator complex, INTS8 is required for the recruitment of protein phosphatase 2A (PP2A) to transcription pause-release checkpoint. The sequence is that of Integrator complex subunit 8-like protein from Dictyostelium discoideum (Social amoeba).